The primary structure comprises 247 residues: TM2 domain-containing protein 3 (247 aa).

The signal sequence occupies residues 1-25 (MIPMMTLKRVCRVLLFITQMYVLSG). The Extracellular segment spans residues 26–179 (RGFLSFEYSE…RTFPKMLYCN (154 aa)). 6 N-linked (GlcNAc...) asparagine glycosylation sites follow: Asn87, Asn99, Asn139, Asn155, Asn169, and Asn179. Residues 180 to 200 (WTGGYKWSTALALSITLGGFG) form a helical membrane-spanning segment. The region spanning 183–231 (GYKWSTALALSITLGGFGADRFYLGQWREGLGKLFSFGGLGIWTLIDVF) is the TM2 domain. Residues 201-215 (ADRFYLGQWREGLGK) lie on the Cytoplasmic side of the membrane. The helical transmembrane segment at 216-236 (LFSFGGLGIWTLIDVFLISVG) threads the bilayer. The Extracellular segment spans residues 237 to 247 (YVGPADGSLYI).

Belongs to the TM2 family.

It localises to the membrane. The polypeptide is TM2 domain-containing protein 3 (tm2d3) (Xenopus tropicalis (Western clawed frog)).